Consider the following 425-residue polypeptide: Dual-specificity RNA methyltransferase RlmN (425 aa).

The Proton acceptor role is filled by Glu136. A Radical SAM core domain is found at 142–389 (GDDRGTLCVS…VRTPRGRDIL (248 aa)). Cys149 and Cys392 form a disulfide bridge. 3 residues coordinate [4Fe-4S] cluster: Cys156, Cys160, and Cys163. S-adenosyl-L-methionine contacts are provided by residues 218 to 219 (GE), Ser250, 272 to 274 (SLH), and Asn349. Cys392 (S-methylcysteine intermediate) is an active-site residue.

Belongs to the radical SAM superfamily. RlmN family. It depends on [4Fe-4S] cluster as a cofactor.

The protein localises to the cytoplasm. It catalyses the reaction adenosine(2503) in 23S rRNA + 2 reduced [2Fe-2S]-[ferredoxin] + 2 S-adenosyl-L-methionine = 2-methyladenosine(2503) in 23S rRNA + 5'-deoxyadenosine + L-methionine + 2 oxidized [2Fe-2S]-[ferredoxin] + S-adenosyl-L-homocysteine. The catalysed reaction is adenosine(37) in tRNA + 2 reduced [2Fe-2S]-[ferredoxin] + 2 S-adenosyl-L-methionine = 2-methyladenosine(37) in tRNA + 5'-deoxyadenosine + L-methionine + 2 oxidized [2Fe-2S]-[ferredoxin] + S-adenosyl-L-homocysteine. Specifically methylates position 2 of adenine 2503 in 23S rRNA and position 2 of adenine 37 in tRNAs. m2A2503 modification seems to play a crucial role in the proofreading step occurring at the peptidyl transferase center and thus would serve to optimize ribosomal fidelity. This is Dual-specificity RNA methyltransferase RlmN from Methylorubrum populi (strain ATCC BAA-705 / NCIMB 13946 / BJ001) (Methylobacterium populi).